Here is a 520-residue protein sequence, read N- to C-terminus: Nucleobase-ascorbate transporter 1 (520 aa).

Helical transmembrane passes span 36 to 56, 64 to 84, 86 to 106, 129 to 149, 150 to 170, 174 to 194, 213 to 233, 279 to 299, 362 to 382, 384 to 404, 415 to 435, and 453 to 473; these read YILM…AMGG, VIQT…LFGT, LPAV…IIND, ALIV…WGLF, SRFF…LGMF, FPQL…VIGL, FPIL…TASG, FAMM…YIAA, GFMI…SIPV, IYAA…LSFL, LMIT…FAQY, and AFLN…AVFM.

It belongs to the nucleobase:cation symporter-2 (NCS2) (TC 2.A.40) family. Expressed in cotyledons 4 days after imbibition (DAI). Expressed in the minor and major veins of cotyledons and leaves, in the shoot apex and pedicels. Expressed in the root meristems, root tips and lateral root primordia.

It is found in the membrane. This Arabidopsis thaliana (Mouse-ear cress) protein is Nucleobase-ascorbate transporter 1 (NAT1).